Consider the following 371-residue polypeptide: Probable protein phosphatase 2C 11 (371 aa).

Residues 29–49 (FFFFLFNSQTISSFIIFYLFL) traverse the membrane as a helical segment. The disordered stretch occupies residues 67–95 (PPLSVAPLRGDANSPPPESSSSPATKSSL). The span at 85 to 94 (SSSSPATKSS) shows a compositional bias: low complexity. In terms of domain architecture, PPM-type phosphatase spans 123–368 (SYGYSSLKGK…DNITCIVVRF (246 aa)). Mn(2+) contacts are provided by Asp-159, Gly-160, Asp-320, and Asp-359.

Belongs to the PP2C family. Mg(2+) serves as cofactor. Requires Mn(2+) as cofactor.

The protein resides in the membrane. It carries out the reaction O-phospho-L-seryl-[protein] + H2O = L-seryl-[protein] + phosphate. The catalysed reaction is O-phospho-L-threonyl-[protein] + H2O = L-threonyl-[protein] + phosphate. The protein is Probable protein phosphatase 2C 11 of Arabidopsis thaliana (Mouse-ear cress).